Consider the following 936-residue polypeptide: Protein translocase subunit SecA (936 aa).

Residues Q87, G105 to T109, and D515 each bind ATP. Zn(2+) contacts are provided by C920, C922, C931, and H932.

The protein belongs to the SecA family. Monomer and homodimer. Part of the essential Sec protein translocation apparatus which comprises SecA, SecYEG and auxiliary proteins SecDF-YajC and YidC. Zn(2+) serves as cofactor.

It localises to the cell inner membrane. Its subcellular location is the cytoplasm. The catalysed reaction is ATP + H2O + cellular proteinSide 1 = ADP + phosphate + cellular proteinSide 2.. Functionally, part of the Sec protein translocase complex. Interacts with the SecYEG preprotein conducting channel. Has a central role in coupling the hydrolysis of ATP to the transfer of proteins into and across the cell membrane, serving both as a receptor for the preprotein-SecB complex and as an ATP-driven molecular motor driving the stepwise translocation of polypeptide chains across the membrane. The protein is Protein translocase subunit SecA of Paraburkholderia phymatum (strain DSM 17167 / CIP 108236 / LMG 21445 / STM815) (Burkholderia phymatum).